The sequence spans 169 residues: MATLTEDDVLEQLDAQDNLFSFMKTAHTILLQGIRQFLPSLFVDNDEEIVEYAVKPLLAQSGPLDDIDVALRLIYALGKMDKWLYADITHFSQFWHYLNEQDETPGFADDMTWDFISNVNSITRNAMLYDALKAMKFADFSVWSEARFSGMVKTALTLAVTTTLKELTP.

The protein belongs to the MtlR/FumE family.

The enzyme catalyses (S)-malate = fumarate + H2O. Its function is as follows. In vitro catalyzes the addition of water to fumarate, forming malate. Cannot catalyze the reverse reaction. Cannot use the cis-isomer maleate as substrate. In Escherichia coli (strain K12), this protein is Fumarase E.